Reading from the N-terminus, the 365-residue chain is 5-hydroxytryptamine receptor 1E (365 aa).

The Extracellular portion of the chain corresponds to 1-22 (MNITNCTTDASMVVRPKTVTEK). N-linked (GlcNAc...) asparagine glycans are attached at residues N2 and N5. The chain crosses the membrane as a helical span at residues 23-47 (MLICMTLVIITTLTMLLNSAVIMAI). The Cytoplasmic portion of the chain corresponds to 48 to 59 (CTTKKLHQPANY). The chain crosses the membrane as a helical span at residues 60–82 (LICSLAVTDLLVAVLVMPLSIMY). Over 83–96 (IVMDSWRLGYFICE) the chain is Extracellular. A disulfide bond links C95 and C173. The chain crosses the membrane as a helical span at residues 97–118 (VWLSVDMTCCTCSILHLCVIAL). D102 and T107 together coordinate ergotamine. Residues 119-121 (DRY) carry the DRY motif; important for ligand-induced conformation changes motif. Topologically, residues 119–138 (DRYWAITNAIEYARKRTAKR) are cytoplasmic. A helical membrane pass occupies residues 139–160 (AGLMILTVWTISIFISMPPLFW). At 161–179 (RSHRQLSPPPSQCTIQHDH) the chain is on the extracellular side. Position 175 (I175) interacts with ergotamine. A helical transmembrane segment spans residues 180-202 (VIYTIYSTFGAFYIPLTLILILY). The Cytoplasmic segment spans residues 203–291 (YRIYHAAKSL…SSTRERKAAR (89 aa)). Residues 292–314 (ILGLILGAFILSWLPFFIKELIV) form a helical membrane-spanning segment. Over 315-324 (GLSIYTVSSE) the chain is Extracellular. The helical transmembrane segment at 325–347 (VGDFLTWLGYVNSLINPLLYTSF) threads the bilayer. Positions 340-344 (NPLLY) match the NPxxY motif; important for ligand-induced conformation changes and signaling motif. Over 348-365 (NEDFKLAFKKLIRCREHT) the chain is Cytoplasmic.

It belongs to the G-protein coupled receptor 1 family. Detected in the brain with the greatest abundance in the hippocampus, followed by the olfactory bulb. Lower levels are detected in the cortex, thalamus, pons, hypothalamus, midbrain, striatum, and cerebellum.

It is found in the cell membrane. Functionally, G-protein coupled receptor for 5-hydroxytryptamine (serotonin). Also functions as a receptor for various alkaloids and psychoactive substances. Ligand binding causes a conformation change that triggers signaling via guanine nucleotide-binding proteins (G proteins) and modulates the activity of down-stream effectors, such as adenylate cyclase. Signaling inhibits adenylate cyclase activity. The chain is 5-hydroxytryptamine receptor 1E (5HT1E) from Cavia porcellus (Guinea pig).